The primary structure comprises 331 residues: NADH-quinone oxidoreductase subunit H 2 (331 aa).

Helical transmembrane passes span 6-26, 79-99, 120-140, 155-175, 193-213, 242-262, 271-291, and 310-330; these read AGFL…LLVA, IFML…AVIP, VGLL…ALGG, GAAQ…PVVM, PFIL…MAEI, LFFL…AVLF, LPPV…MIWV, and VLIP…LWMG.

The protein belongs to the complex I subunit 1 family. In terms of assembly, NDH-1 is composed of 14 different subunits. Subunits NuoA, H, J, K, L, M, N constitute the membrane sector of the complex.

Its subcellular location is the cell inner membrane. It carries out the reaction a quinone + NADH + 5 H(+)(in) = a quinol + NAD(+) + 4 H(+)(out). Functionally, NDH-1 shuttles electrons from NADH, via FMN and iron-sulfur (Fe-S) centers, to quinones in the respiratory chain. The immediate electron acceptor for the enzyme in this species is believed to be ubiquinone. Couples the redox reaction to proton translocation (for every two electrons transferred, four hydrogen ions are translocated across the cytoplasmic membrane), and thus conserves the redox energy in a proton gradient. This subunit may bind ubiquinone. In Syntrophobacter fumaroxidans (strain DSM 10017 / MPOB), this protein is NADH-quinone oxidoreductase subunit H 2.